The chain runs to 84 residues: Small ribosomal subunit protein uS17 (84 aa).

It belongs to the universal ribosomal protein uS17 family. As to quaternary structure, part of the 30S ribosomal subunit.

One of the primary rRNA binding proteins, it binds specifically to the 5'-end of 16S ribosomal RNA. The sequence is that of Small ribosomal subunit protein uS17 from Clostridium botulinum (strain Okra / Type B1).